The chain runs to 289 residues: NAD(P)H-hydrate epimerase (289 aa).

Residues 71–277 form the YjeF N-terminal domain; sequence AQTIDNELMS…SIVEKYNLKV (207 aa). 122–126 lines the (6S)-NADPHX pocket; sequence NNGGD. Positions 123 and 185 each coordinate K(+). Residues 189-195 and Asp218 contribute to the (6S)-NADPHX site; that span reads GFSFTGE. Ser221 is a binding site for K(+).

Belongs to the NnrE/AIBP family. K(+) is required as a cofactor.

The enzyme catalyses (6R)-NADHX = (6S)-NADHX. The catalysed reaction is (6R)-NADPHX = (6S)-NADPHX. Its function is as follows. Catalyzes the epimerization of the S- and R-forms of NAD(P)HX, a damaged form of NAD(P)H that is a result of enzymatic or heat-dependent hydration. This is a prerequisite for the S-specific NAD(P)H-hydrate dehydratase to allow the repair of both epimers of NAD(P)HX. The chain is NAD(P)H-hydrate epimerase from Plasmodium vivax (strain Salvador I).